The following is a 491-amino-acid chain: Glutamate--tRNA ligase (491 aa).

Positions 13–23 match the 'HIGH' region motif; that stretch reads PSPTGFLHIGN. Zn(2+) contacts are provided by C110, C112, C137, and H139. Positions 254 to 258 match the 'KMSKS' region motif; that stretch reads KLSKR. Residue K257 participates in ATP binding.

This sequence belongs to the class-I aminoacyl-tRNA synthetase family. Glutamate--tRNA ligase type 1 subfamily. In terms of assembly, monomer. Zn(2+) serves as cofactor.

It is found in the cytoplasm. It carries out the reaction tRNA(Glu) + L-glutamate + ATP = L-glutamyl-tRNA(Glu) + AMP + diphosphate. Functionally, catalyzes the attachment of glutamate to tRNA(Glu) in a two-step reaction: glutamate is first activated by ATP to form Glu-AMP and then transferred to the acceptor end of tRNA(Glu). In Listeria monocytogenes serovar 1/2a (strain ATCC BAA-679 / EGD-e), this protein is Glutamate--tRNA ligase.